The following is a 184-amino-acid chain: Large ribosomal subunit protein uL5 (184 aa).

This sequence belongs to the universal ribosomal protein uL5 family. Part of the 50S ribosomal subunit; part of the 5S rRNA/L5/L18/L25 subcomplex. Contacts the 5S rRNA and the P site tRNA. Forms a bridge to the 30S subunit in the 70S ribosome.

Functionally, this is one of the proteins that bind and probably mediate the attachment of the 5S RNA into the large ribosomal subunit, where it forms part of the central protuberance. In the 70S ribosome it contacts protein S13 of the 30S subunit (bridge B1b), connecting the 2 subunits; this bridge is implicated in subunit movement. Contacts the P site tRNA; the 5S rRNA and some of its associated proteins might help stabilize positioning of ribosome-bound tRNAs. This Ureaplasma urealyticum serovar 10 (strain ATCC 33699 / Western) protein is Large ribosomal subunit protein uL5.